The sequence spans 433 residues: D-amino acid dehydrogenase (433 aa).

3 to 17 (IVVLGAGVLGVTSAW) is a binding site for FAD.

It belongs to the DadA oxidoreductase family. FAD serves as cofactor.

The enzyme catalyses a D-alpha-amino acid + A + H2O = a 2-oxocarboxylate + AH2 + NH4(+). The protein operates within amino-acid degradation; D-alanine degradation; NH(3) and pyruvate from D-alanine: step 1/1. Functionally, oxidative deamination of D-amino acids. This is D-amino acid dehydrogenase from Paracoccus denitrificans (strain Pd 1222).